A 445-amino-acid polypeptide reads, in one-letter code: METIFAQSSAFGKAGVAVFRISGPKSLEVLQLLTGRKDFKPRLMYYQQIIVPETNELIDNAMVVYFKLPNSFTGEDVVEIHTHGSKAISIMLINTLLNIADIRLAEAGEFTKRAFLNNKFDLTAAEGIADLINAETIMQHRQAVRQANGGLKELYNKWRNQLLKIISLLEAYIDFPDEDIPESILNDVNNTHKNIVNEISNYLNDNRRGELLNNGLKLAIIGPPNTGKSSLLNFLMQRNIAIVSNIAGTTRDIIEGHLDIGGYPIILQDTAGIRTESTDIIEQEGIKRAINSAKTANIKIVMFDAEKLDSSINNDITGLIDENTIVIINKIDLIEPNKTFAIENRYKCLRVSVKNNIALSNILKNIENIAENLAGVTETPYITNQRHRHYLKQALSHLIDFNLDNDLVLATEDIRMTVRCIGLITGVINVEEILNEIFKNFCIGK.

Positions 20, 79, and 119 each coordinate (6S)-5-formyl-5,6,7,8-tetrahydrofolate. Residues 215–371 (GLKLAIIGPP…ILKNIENIAE (157 aa)) form the TrmE-type G domain. Residue asparagine 225 participates in K(+) binding. Residues 225–230 (NTGKSS), 244–250 (SNIAGTT), and 269–272 (DTAG) each bind GTP. Serine 229 is a Mg(2+) binding site. 3 residues coordinate K(+): serine 244, isoleucine 246, and threonine 249. Threonine 250 is a binding site for Mg(2+). (6S)-5-formyl-5,6,7,8-tetrahydrofolate is bound at residue lysine 445.

It belongs to the TRAFAC class TrmE-Era-EngA-EngB-Septin-like GTPase superfamily. TrmE GTPase family. In terms of assembly, homodimer. Heterotetramer of two MnmE and two MnmG subunits. It depends on K(+) as a cofactor.

Its subcellular location is the cytoplasm. Functionally, exhibits a very high intrinsic GTPase hydrolysis rate. Involved in the addition of a carboxymethylaminomethyl (cmnm) group at the wobble position (U34) of certain tRNAs, forming tRNA-cmnm(5)s(2)U34. In Rickettsia prowazekii (strain Madrid E), this protein is tRNA modification GTPase MnmE.